The following is a 414-amino-acid chain: uncharacterized protein (414 aa).

Belongs to the UbiH/COQ6 family. FAD serves as cofactor.

This is an uncharacterized protein from Synechocystis sp. (strain ATCC 27184 / PCC 6803 / Kazusa).